Consider the following 210-residue polypeptide: Proteasome subunit beta (210 aa).

A propeptide spans 1–9 (MDNDKYLKG) (removed in mature form; by autocatalysis). The Nucleophile role is filled by Thr-10.

It belongs to the peptidase T1B family. In terms of assembly, the 20S proteasome core is composed of 14 alpha and 14 beta subunits that assemble into four stacked heptameric rings, resulting in a barrel-shaped structure. The two inner rings, each composed of seven catalytic beta subunits, are sandwiched by two outer rings, each composed of seven alpha subunits. The catalytic chamber with the active sites is on the inside of the barrel. Has a gated structure, the ends of the cylinder being occluded by the N-termini of the alpha-subunits. Is capped at one or both ends by the proteasome regulatory ATPase, PAN.

The protein resides in the cytoplasm. The enzyme catalyses Cleavage of peptide bonds with very broad specificity.. Its activity is regulated as follows. The formation of the proteasomal ATPase PAN-20S proteasome complex, via the docking of the C-termini of PAN into the intersubunit pockets in the alpha-rings, triggers opening of the gate for substrate entry. Interconversion between the open-gate and close-gate conformations leads to a dynamic regulation of the 20S proteasome proteolysis activity. Component of the proteasome core, a large protease complex with broad specificity involved in protein degradation. The chain is Proteasome subunit beta from Methanosarcina thermophila.